Consider the following 226-residue polypeptide: Charged multivesicular body protein 4 (226 aa).

Positions 22 to 88 (IQKLRETENM…DGTLSTIEMQ (67 aa)) form a coiled coil. The disordered stretch occupies residues 169-226 (QENFDKEIIGIPEPTPTLPEAPTEDLPEKAKEKKKATTTTAVEDDDDPDMKQLLSWSN).

This sequence belongs to the SNF7 family. Homopolymer; forms elongated striated filaments of uniform ~10nm width. Monomers interact in a staggered arrangement mediated by complementary charged electrostatic surfaces. Interacts with l(2)gd1 (via DM14 domains 1 and 3); the interaction is direct and blocks access to the surface involved in homopolymerization. This interaction may be required for the ESCRT-III complex role in multivesicular body formation. In terms of tissue distribution, expressed at considerably higher levels in testis than in ovary. Expressed in midgut, eye, mouthparts and male accessory gland.

The protein localises to the endosome. Its subcellular location is the multivesicular body. It is found in the midbody. With respect to regulation, may be regulated by aurB/Aurora kinase B-dependent phosphorylation. In terms of biological role, probable core polymerisation component of the endosomal sorting required for transport (ESCRT) III complex involved in multiple cellular processes requiring the outward bending of membranes, including vesicle budding, membrane repair and cytokinesis. The ESCRT pathway involves 4 complexes (ESCRT-0, -I, -II and -III) that sequentially assemble on the cytoplasmic side of membranes and induce membrane remodeling, budding and scission. As part of the ESCRT-III complex, involved in the budding of intraluminal vesicles (ILVs) into endosomes to form multivesicular bodies (MVBs), which target their contents for degradation via the endolysosomal pathway. Involved in regulation of signal transduction pathways, including the Notch and BMP/decapentaplegic (dpp) pathways, by sequestering the intracellular domains of activated receptors into ILVs, isolating them from the cytoplasm and targeting them for lysosomal degradation. Involved in targeting ubiquitilated proteins, such as mono-ubiquitilanated N/Notch, to MVBs for degradation. Plays a role in wing development by regulating Notch signaling. Involved in abscission of germline cells during oogenesis. Involved in spermiogenesis. Required for efficient cytoplasmic isolation and abscission during cytokinesis of epithelial sensory organ precursor cells. May be involved in septate junction remodeling and maintenance. This Drosophila melanogaster (Fruit fly) protein is Charged multivesicular body protein 4.